Consider the following 38-residue polypeptide: Large ribosomal subunit protein bL36 (38 aa).

The protein belongs to the bacterial ribosomal protein bL36 family.

In Thermotoga maritima (strain ATCC 43589 / DSM 3109 / JCM 10099 / NBRC 100826 / MSB8), this protein is Large ribosomal subunit protein bL36.